The primary structure comprises 184 residues: ADP-ribosylation factor-like protein 2 (184 aa).

Residue Gly2 is the site of N-myristoyl glycine attachment. Residues 23–30, 66–70, Gly68, and 125–128 contribute to the GTP site; these read GLDNAGKT, DVGGQ, and NKSD.

It belongs to the small GTPase superfamily. Arf family.

It localises to the cytoplasm. It is found in the cell membrane. Its subcellular location is the cytoskeleton. The protein localises to the microtubule organizing center. The protein resides in the centrosome. GTP-binding protein that functions in embryogenesis, cytokinesis, germline development and microtubulule cytoskeleton dynamics. This chain is ADP-ribosylation factor-like protein 2 (evl-20.1), found in Caenorhabditis briggsae.